Consider the following 87-residue polypeptide: uncharacterized protein (87 aa).

The next 2 membrane-spanning stretches (helical) occupy residues 7–27 and 64–84; these read LFFIQIVISIFNSHLAVLYSI and GINIFSFSISLFLIFLTIPLF.

The protein resides in the membrane. This is an uncharacterized protein from Schizosaccharomyces pombe (strain 972 / ATCC 24843) (Fission yeast).